A 220-amino-acid polypeptide reads, in one-letter code: Serine protease-like protein 51 (220 aa).

Positions 1 to 16 (MFQLLIPLLLALKGHA) are cleaved as a signal peptide. A Peptidase S1 domain is found at 23–220 (VQCGHRPAFP…SSKWVSSVGA (198 aa)). A glycan (N-linked (GlcNAc...) asparagine) is linked at Asn33. Cys64 and Cys80 are disulfide-bonded. The N-linked (GlcNAc...) asparagine glycan is linked to Asn92. A disulfide bond links Cys157 and Cys170.

This sequence belongs to the peptidase S1 family.

It localises to the secreted. The protein is Serine protease-like protein 51 of Homo sapiens (Human).